The primary structure comprises 214 residues: Single-pass membrane and coiled-coil domain-containing protein 1 (214 aa).

The stretch at T6–K42 forms a coiled coil. The chain crosses the membrane as a helical span at residues A65–I81.

Its subcellular location is the membrane. This Homo sapiens (Human) protein is Single-pass membrane and coiled-coil domain-containing protein 1 (SMCO1).